The sequence spans 631 residues: 1-deoxy-D-xylulose-5-phosphate synthase (631 aa).

Thiamine diphosphate is bound by residues histidine 73 and 114–116 (GHS). Position 145 (aspartate 145) interacts with Mg(2+). Thiamine diphosphate-binding positions include 146–147 (GA), asparagine 174, tyrosine 285, and glutamate 366. Asparagine 174 contacts Mg(2+).

Belongs to the transketolase family. DXPS subfamily. Homodimer. Mg(2+) is required as a cofactor. Requires thiamine diphosphate as cofactor.

It catalyses the reaction D-glyceraldehyde 3-phosphate + pyruvate + H(+) = 1-deoxy-D-xylulose 5-phosphate + CO2. Its pathway is metabolic intermediate biosynthesis; 1-deoxy-D-xylulose 5-phosphate biosynthesis; 1-deoxy-D-xylulose 5-phosphate from D-glyceraldehyde 3-phosphate and pyruvate: step 1/1. Functionally, catalyzes the acyloin condensation reaction between C atoms 2 and 3 of pyruvate and glyceraldehyde 3-phosphate to yield 1-deoxy-D-xylulose-5-phosphate (DXP). The protein is 1-deoxy-D-xylulose-5-phosphate synthase of Desulfitobacterium hafniense (strain Y51).